A 630-amino-acid chain; its full sequence is 1-deoxy-D-xylulose-5-phosphate synthase (630 aa).

Thiamine diphosphate is bound by residues His-72 and 113-115 (GHS). Asp-144 serves as a coordination point for Mg(2+). Residues 145-146 (GA), Asn-173, Tyr-284, and Glu-367 each bind thiamine diphosphate. Position 173 (Asn-173) interacts with Mg(2+).

This sequence belongs to the transketolase family. DXPS subfamily. In terms of assembly, homodimer. Mg(2+) is required as a cofactor. The cofactor is thiamine diphosphate.

The catalysed reaction is D-glyceraldehyde 3-phosphate + pyruvate + H(+) = 1-deoxy-D-xylulose 5-phosphate + CO2. Its pathway is metabolic intermediate biosynthesis; 1-deoxy-D-xylulose 5-phosphate biosynthesis; 1-deoxy-D-xylulose 5-phosphate from D-glyceraldehyde 3-phosphate and pyruvate: step 1/1. Functionally, catalyzes the acyloin condensation reaction between C atoms 2 and 3 of pyruvate and glyceraldehyde 3-phosphate to yield 1-deoxy-D-xylulose-5-phosphate (DXP). This is 1-deoxy-D-xylulose-5-phosphate synthase from Bacillus cereus (strain ATCC 10987 / NRS 248).